We begin with the raw amino-acid sequence, 85 residues long: Probable dolichol-phosphate mannosyltransferase subunit 3 (85 aa).

The next 2 membrane-spanning stretches (helical) occupy residues 13–33 (VLLVLVWLLAYTEVVPVLSYI) and 37–57 (AHCLVYYIYAAFNVIYGVATF).

Belongs to the DPM3 family.

The protein localises to the endoplasmic reticulum membrane. It participates in protein modification; protein glycosylation. Its function is as follows. Stabilizer subunit of the dolichol-phosphate-mannose synthase complex. This Caenorhabditis briggsae protein is Probable dolichol-phosphate mannosyltransferase subunit 3.